An 88-amino-acid polypeptide reads, in one-letter code: EMBRYO SURROUNDING FACTOR 1-like protein 7 (88 aa).

The first 22 residues, 1–22, serve as a signal peptide directing secretion; sequence MKSSHIALICIVMFSLFALHES. 4 cysteine pairs are disulfide-bonded: C41/C57, C46/C85, C55/C81, and C58/C68.

Belongs to the MEG family. As to expression, expressed in leaves and flowers.

The sequence is that of EMBRYO SURROUNDING FACTOR 1-like protein 7 (ESFL7) from Arabidopsis thaliana (Mouse-ear cress).